The primary structure comprises 376 residues: MAEQMQISRRTILAGAALAGALAPVLATTSAWGQGAVRKATAAEIAALPRQKVELVDPPFVHAHSQVAEGGPKVVEFTMVIEEKKIVIDDAGTEVHAMAFNGTVPGPLMVVHQDDYLELTLINPETNTLMHNIDFHAATGALGGGGLTEINPGEKTILRFKATKPGVFVYHCAPPGMVPWHVVSGMNGAIMVLPREGLHDGKGKALTYDKIYYVGEQDFYVPRDENGKYKKYEAPGDAYEDTVKVMRTLTPTHVVFNGAVGALTGDKAMTAAVGEKVLIVHSQANRDTRPHLIGGHGDYVWATGKFNTPPDVDQETWFIPGGAAGAAFYTFQQPGIYAYVNHNLIEAFELGAAAHFKVTGEWNDDLMTSVLAPSGT.

The tat-type signal signal peptide spans 1–33 (MAEQMQISRRTILAGAALAGALAPVLATTSAWG). Q34 bears the Pyrrolidone carboxylic acid mark. Plastocyanin-like domains are found at residues 34 to 211 (QGAV…YDKI) and 212 to 376 (YYVG…PSGT). Cu cation contacts are provided by H131, H136, H171, C172, H181, M186, and H342.

It belongs to the multicopper oxidase family. As to quaternary structure, homotrimer. It depends on Cu(2+) as a cofactor. Requires Cu(+) as cofactor. The cofactor is FAD. In terms of processing, predicted to be exported by the Tat system. The position of the signal peptide cleavage has been experimentally proven.

The protein resides in the periplasm. The catalysed reaction is nitric oxide + Fe(III)-[cytochrome c] + H2O = Fe(II)-[cytochrome c] + nitrite + 2 H(+). Its pathway is nitrogen metabolism; nitrate reduction (denitrification); dinitrogen from nitrate: step 2/4. This is Copper-containing nitrite reductase (nirK) from Alcaligenes faecalis.